The following is a 491-amino-acid chain: Trigger factor (491 aa).

A PPIase FKBP-type domain is found at 169–254 (GDRVTIDYLG…VKDVAAAAPI (86 aa)). The tract at residues 434 to 491 (KVSKEELTAEDDADEKPAKKTASKKKAAAKADAAEGEEAAAPKRKAPAKKKASDESAE) is disordered. The span at 452 to 461 (KKTASKKKAA) shows a compositional bias: basic residues.

This sequence belongs to the FKBP-type PPIase family. Tig subfamily.

The protein resides in the cytoplasm. The enzyme catalyses [protein]-peptidylproline (omega=180) = [protein]-peptidylproline (omega=0). Involved in protein export. Acts as a chaperone by maintaining the newly synthesized protein in an open conformation. Functions as a peptidyl-prolyl cis-trans isomerase. This chain is Trigger factor, found in Sinorhizobium medicae (strain WSM419) (Ensifer medicae).